The chain runs to 105 residues: RxLR effector protein PITG_18670 (105 aa).

Positions 1 to 21 (MRSIFYFALAFAALTCSNASA) are cleaved as a signal peptide. A RxLR-dEER motif is present at residues 39 to 57 (RSLRVAGQEVARGDRGEEI).

This sequence belongs to the RxLR effector family.

Its subcellular location is the secreted. It localises to the host nucleus. The protein localises to the host nucleolus. It is found in the host cytoplasm. Its function is as follows. Effector that enhances P.infestans colonization of Nicotiana benthamiana leaves. The polypeptide is RxLR effector protein PITG_18670 (Phytophthora infestans (strain T30-4) (Potato late blight agent)).